The chain runs to 301 residues: Fructokinase (301 aa).

Residues H165, C181, H184, and C187 each coordinate Zn(2+).

The protein belongs to the ROK (NagC/XylR) family. Mg(2+) serves as cofactor.

It carries out the reaction D-fructose + ATP = D-fructose 6-phosphate + ADP + H(+). With respect to regulation, inhibition by zinc ions. This is Fructokinase (frk) from Zymomonas mobilis subsp. mobilis (strain ATCC 31821 / ZM4 / CP4).